We begin with the raw amino-acid sequence, 785 residues long: Semaphorin-3F (785 aa).

Positions 1–18 (MLVTAFILWASLLTGAWP) are cleaved as a signal peptide. Residues 31-545 (RVRLSFKELK…SAVGVTHLSL (515 aa)) enclose the Sema domain. N-linked (GlcNAc...) asparagine glycosylation occurs at Asn-53. A disulfide bond links Cys-104 and Cys-115. N-linked (GlcNAc...) asparagine glycosylation occurs at Asn-126. 4 disulfide bridges follow: Cys-133–Cys-142, Cys-300–Cys-412, Cys-324–Cys-372, and Cys-548–Cys-566. Residues 583–602 (RSRRQDVRHGNPIRQCRGFN) are disordered. The Ig-like C2-type domain maps to 605 to 695 (ANKNAVESVQ…KHIVTRVQLH (91 aa)). Cys-678 and Cys-746 are oxidised to a cystine. Residues 753 to 785 (VPPRPREAPGALRPPELQDQKKPRNRRHHPPDT) form a disordered region. Residues 775–785 (PRNRRHHPPDT) are compositionally biased toward basic residues.

This sequence belongs to the semaphorin family. As to expression, expressed ubiquitously in adulthood. During embryogenesis, expressed in subregions of the central nervous system and various other tissues like skin, kidney, lung and intestine.

Its subcellular location is the secreted. The polypeptide is Semaphorin-3F (Sema3f) (Mus musculus (Mouse)).